A 341-amino-acid polypeptide reads, in one-letter code: N-acetyl-gamma-glutamyl-phosphate reductase (341 aa).

Cys145 is a catalytic residue.

This sequence belongs to the NAGSA dehydrogenase family. Type 1 subfamily.

It localises to the cytoplasm. The catalysed reaction is N-acetyl-L-glutamate 5-semialdehyde + phosphate + NADP(+) = N-acetyl-L-glutamyl 5-phosphate + NADPH + H(+). Its pathway is amino-acid biosynthesis; L-arginine biosynthesis; N(2)-acetyl-L-ornithine from L-glutamate: step 3/4. Its function is as follows. Catalyzes the NADPH-dependent reduction of N-acetyl-5-glutamyl phosphate to yield N-acetyl-L-glutamate 5-semialdehyde. This is N-acetyl-gamma-glutamyl-phosphate reductase from Streptomyces clavuligerus.